A 277-amino-acid polypeptide reads, in one-letter code: Protein OPG166 (277 aa).

N-linked (GlcNAc...) asparagine; by host glycans are attached at residues N29 and N58. The next 5 membrane-spanning stretches (helical) occupy residues 124 to 144, 156 to 176, 186 to 206, 219 to 239, and 247 to 267; these read TMLM…EIAY, GILQ…AFLF, IIGL…KVFS, LIIY…GLSL, and LLLS…LFLV.

This sequence belongs to the orthopoxvirus OPG166 protein family.

The protein resides in the host membrane. Promotes, when overexpressed, the influx of extracellular Ca(2+), leading to membrane permeability and host cell necrosis. The chain is Protein OPG166 (OPG166) from Cynomys gunnisoni (Gunnison's prairie dog).